Reading from the N-terminus, the 184-residue chain is Uroplakin-2 (184 aa).

Positions 1 to 25 are cleaved as a signal peptide; the sequence is MASPLPVRTLPLILILLAVLAPGAS. Residues 26–84 constitute a propeptide that is removed on maturation; that stretch reads DFNISSLSGPLSPALTESLLVALPPCHLTGGNATLMVRRANDSKVVKSSFMVPPCRGRR. N-linked (GlcNAc...) asparagine glycosylation is found at Asn-28, Asn-57, and Asn-66. The Lumenal segment spans residues 85 to 155; that stretch reads ELVSVVDSGS…IGLGMARTGG (71 aa). The chain crosses the membrane as a helical span at residues 156 to 180; the sequence is MVVITVLLSVAMFLLVVGFITALAL. The Cytoplasmic segment spans residues 181 to 184; sequence GARK.

Belongs to the uroplakin-2 family. Interacts with uroplakin-1a (UPK1A). Expressed only in the urothelium. Localizes to urothelial superficial cells.

The protein resides in the cell membrane. In terms of biological role, component of the asymmetric unit membrane (AUM); a highly specialized biomembrane elaborated by terminally differentiated urothelial cells. May play an important role in regulating the assembly of the AUM. The chain is Uroplakin-2 (UPK2) from Sus scrofa (Pig).